The primary structure comprises 312 residues: Glyoxylate/hydroxypyruvate reductase A (312 aa).

Arginine 227 is a catalytic residue. Residue histidine 275 is the Proton donor of the active site.

Belongs to the D-isomer specific 2-hydroxyacid dehydrogenase family. GhrA subfamily.

The protein localises to the cytoplasm. It carries out the reaction glycolate + NADP(+) = glyoxylate + NADPH + H(+). The catalysed reaction is (R)-glycerate + NAD(+) = 3-hydroxypyruvate + NADH + H(+). The enzyme catalyses (R)-glycerate + NADP(+) = 3-hydroxypyruvate + NADPH + H(+). Catalyzes the NADPH-dependent reduction of glyoxylate and hydroxypyruvate into glycolate and glycerate, respectively. The protein is Glyoxylate/hydroxypyruvate reductase A of Escherichia coli O127:H6 (strain E2348/69 / EPEC).